The sequence spans 365 residues: Terpene cyclase 4 (365 aa).

Positions 1-11 (MVPSLITPPPS) are enriched in pro residues. The segment at 1–20 (MVPSLITPPPSRSGEATPQK) is disordered. D118, N260, and S264 together coordinate Mg(2+). Residues 118–122 (DDPFD) carry the D(D/E)XX(D/E) motif motif. The NSE motif signature appears at 260–268 (NDLCSYRKD). Residues 341–348 (WSLYTFRY) carry the WxxxxxRY motif motif. The (2E,6E)-farnesyl diphosphate site is built by R347 and Y348.

It belongs to the terpene synthase family. Homodimer. It depends on Mg(2+) as a cofactor.

The catalysed reaction is (2E,6E)-farnesyl diphosphate + H2O = koraiol + diphosphate. It participates in sesquiterpene biosynthesis. Terpene cyclase that catalyzes the cyclization of farnesyl diphosphate (FPP) to the sesquiterpene koraiol. The polypeptide is Terpene cyclase 4 (Gibberella fujikuroi (strain CBS 195.34 / IMI 58289 / NRRL A-6831) (Bakanae and foot rot disease fungus)).